Consider the following 269-residue polypeptide: Tryptophan synthase alpha chain (269 aa).

Catalysis depends on proton acceptor residues E49 and D60.

It belongs to the TrpA family. In terms of assembly, tetramer of two alpha and two beta chains.

It catalyses the reaction (1S,2R)-1-C-(indol-3-yl)glycerol 3-phosphate + L-serine = D-glyceraldehyde 3-phosphate + L-tryptophan + H2O. Its pathway is amino-acid biosynthesis; L-tryptophan biosynthesis; L-tryptophan from chorismate: step 5/5. Functionally, the alpha subunit is responsible for the aldol cleavage of indoleglycerol phosphate to indole and glyceraldehyde 3-phosphate. The chain is Tryptophan synthase alpha chain from Stutzerimonas stutzeri (strain A1501) (Pseudomonas stutzeri).